A 313-amino-acid chain; its full sequence is Porphobilinogen deaminase (313 aa).

Cys242 carries the S-(dipyrrolylmethanemethyl)cysteine modification.

It belongs to the HMBS family. Monomer. Dipyrromethane serves as cofactor.

It carries out the reaction 4 porphobilinogen + H2O = hydroxymethylbilane + 4 NH4(+). It functions in the pathway porphyrin-containing compound metabolism; protoporphyrin-IX biosynthesis; coproporphyrinogen-III from 5-aminolevulinate: step 2/4. In terms of biological role, tetrapolymerization of the monopyrrole PBG into the hydroxymethylbilane pre-uroporphyrinogen in several discrete steps. The chain is Porphobilinogen deaminase from Pseudomonas paraeruginosa (strain DSM 24068 / PA7) (Pseudomonas aeruginosa (strain PA7)).